The chain runs to 703 residues: Phenylalanine aminomutase (L-beta-phenylalanine forming) (703 aa).

Tyr-79 (proton donor/acceptor) is an active-site residue. The segment at residues 177 to 179 (ASG) is a cross-link (5-imidazolinone (Ala-Gly)). Ser-178 carries the post-translational modification 2,3-didehydroalanine (Ser).

This sequence belongs to the PAL/histidase family. In terms of processing, contains an active site 4-methylidene-imidazol-5-one (MIO), which is formed autocatalytically by cyclization and dehydration of residues Ala-Ser-Gly.

It carries out the reaction L-phenylalanine = L-beta-phenylalanine. It functions in the pathway mycotoxin biosynthesis. Phenylalanine aminomutase; part of the gene cluster that mediates the biosynthesis of the mycotoxin cyclochlorotine, a hepatotoxic and carcinogenic cyclic chlorinated pentapeptide. Within the pathway, cctP1 provides the uncommon building block beta-Phe from Phe. The NRPS cctN initially catalyzes the condensation of L-serine (Ser), Pro, L-2-aminobutyrate (2Abu), Ser, and beta-Phe in this order to produce isocyclotine. After the dichlorination of Pro2 catalyzed by cctP2 to produce isocyclochlorotine, the cctO-mediated transacylation of isocyclochlorotine can furnish cyclochlorotine. The subsequent hydroxylation of cyclochlorotine by cctR yields hydroxycyclochlorotine as the final product. CctP1 probably acts as a phenylalanine aminomutase and provides the uncommon building block beta-Phe. Furthermore, 2Abu can be synthesized from threonine by one of the threonine dehydratases and transaminases localized outside of the cluster. The functions of the remaining proteins encoded by the cluster, cctM and cctT, have not been identified yet. This is Phenylalanine aminomutase (L-beta-phenylalanine forming) from Talaromyces islandicus (Penicillium islandicum).